We begin with the raw amino-acid sequence, 136 residues long: Small ribosomal subunit protein uS19 (136 aa).

This sequence belongs to the universal ribosomal protein uS19 family.

In terms of biological role, protein S19 forms a complex with S13 that binds strongly to the 16S ribosomal RNA. The polypeptide is Small ribosomal subunit protein uS19 (Methanosarcina mazei (strain ATCC BAA-159 / DSM 3647 / Goe1 / Go1 / JCM 11833 / OCM 88) (Methanosarcina frisia)).